Here is a 243-residue protein sequence, read N- to C-terminus: Geranylgeranylglyceryl phosphate synthase (243 aa).

2 residues coordinate Mg(2+): Asp-29 and Ser-58. Residues 178–184 (YLEAGSG), 209–210 (GG), and 231–232 (GT) each bind sn-glycerol 1-phosphate.

Belongs to the GGGP/HepGP synthase family. Group II subfamily. As to quaternary structure, homodimer. The cofactor is Mg(2+).

It catalyses the reaction sn-glycerol 1-phosphate + (2E,6E,10E)-geranylgeranyl diphosphate = sn-3-O-(geranylgeranyl)glycerol 1-phosphate + diphosphate. Functionally, prenyltransferase that catalyzes the transfer of the geranylgeranyl moiety of geranylgeranyl diphosphate (GGPP) to the C3 hydroxyl of sn-glycerol-1-phosphate (G1P). In Flavobacterium johnsoniae (strain ATCC 17061 / DSM 2064 / JCM 8514 / BCRC 14874 / CCUG 350202 / NBRC 14942 / NCIMB 11054 / UW101) (Cytophaga johnsonae), this protein is Geranylgeranylglyceryl phosphate synthase.